Reading from the N-terminus, the 178-residue chain is Caveolin-1 (178 aa).

An N-acetylserine modification is found at Ser-2. Position 2 is a phosphoserine (Ser-2). The tract at residues 2–94 (SGGKYVDSEG…WKASFTTFTV (93 aa)) is required for homooligomerization. Over 2-104 (SGGKYVDSEG…TKYWFYRLLS (103 aa)) the chain is Cytoplasmic. The residue at position 5 (Lys-5) is an N6-acetyllysine; alternate. Residue Lys-5 forms a Glycyl lysine isopeptide (Lys-Gly) (interchain with G-Cter in ubiquitin); alternate linkage. Phosphotyrosine is present on Tyr-6. At Ser-9 the chain carries Phosphoserine. Phosphotyrosine; by ABL1 is present on Tyr-14. Phosphotyrosine is present on Tyr-25. Residues Lys-26 and Lys-30 each participate in a glycyl lysine isopeptide (Lys-Gly) (interchain with G-Cter in ubiquitin) cross-link. Ser-37 is modified (phosphoserine). Glycyl lysine isopeptide (Lys-Gly) (interchain with G-Cter in ubiquitin) cross-links involve residues Lys-39, Lys-47, and Lys-57. Residues 82-94 (DGIWKASFTTFTV) form an interaction with CAVIN3 region. The segment at residues 105–125 (ALFGIPMALIWGIYFAILSFL) is an intramembrane region (helical). Residues 126-178 (HIWAVVPCIKSFLIEIQCISRVYSIYVHTFCDPFFEAVGKIFSNIRINMQKET) lie on the Cytoplasmic side of the membrane. Positions 131-142 (VPCIKSFLIEIQ) are interacts with SPRY1, SPRY2, SPRY3 and SPRY4. S-palmitoyl cysteine attachment occurs at residues Cys-133, Cys-143, and Cys-156. The segment at 149–160 (SIYVHTFCDPFF) is interacts with SPRY1, SPRY2, and SPRY4. The interval 167–178 (FSNIRINMQKET) is interacts with SPRY1, SPRY2, SPRY3 and SPRY4.

It belongs to the caveolin family. As to quaternary structure, homooligomer. Interacts with BMX, BTK, GLIPR2, NOSTRIN, SNAP25 and STX1A. Interacts with PACSIN2; this interaction induces membrane tubulation. Interacts (via the N-terminus) with DPP4; the interaction is direct. Interacts with SLC7A9. Interacts with CTNNB1, CDH1 and JUP. Interacts with TGFBR1. Interacts with CAVIN3 (via leucine-zipper domain) in a cholesterol-sensitive manner. Interacts with CAVIN1. Interacts with EHD2 in a cholesterol-dependent manner. Forms a ternary complex with UBXN6 and VCP; mediates CAV1 targeting to lysosomes for degradation. Interacts with ABCG1; this interaction regulates ABCG1-mediated cholesterol efflux. Interacts with NEU3; this interaction enhances NEU3 sialidase activity within caveola. Interacts (via C-terminus) with SPRY1, SPRY2 (via C-terminus), SPRY3, and SPRY4. Interacts with IGFBP5; this interaction allows trafficking of IGFBP5 from the plasma membrane to the nucleus. Post-translationally, phosphorylation of isoform Beta on serine residues is constitutive. Phosphorylated at Tyr-14 by ABL1 in response to oxidative stress. In terms of processing, ubiquitinated. Undergo monoubiquitination and multi- and/or polyubiquitination. Monoubiquitination of N-terminal lysines promotes integration in a ternary complex with UBXN6 and VCP which promotes oligomeric CAV1 targeting to lysosomes for degradation. Ubiquitinated by ZNRF1; leading to degradation and modulation of the TLR4-mediated immune response.

Its subcellular location is the golgi apparatus membrane. It is found in the cell membrane. The protein resides in the membrane. The protein localises to the caveola. It localises to the membrane raft. Its subcellular location is the golgi apparatus. It is found in the trans-Golgi network. In terms of biological role, may act as a scaffolding protein within caveolar membranes. Forms a stable heterooligomeric complex with CAV2 that targets to lipid rafts and drives caveolae formation. Mediates the recruitment of CAVIN proteins (CAVIN1/2/3/4) to the caveolae. Interacts directly with G-protein alpha subunits and can functionally regulate their activity. Involved in the costimulatory signal essential for T-cell receptor (TCR)-mediated T-cell activation. Its binding to DPP4 induces T-cell proliferation and NF-kappa-B activation in a T-cell receptor/CD3-dependent manner. Recruits CTNNB1 to caveolar membranes and may regulate CTNNB1-mediated signaling through the Wnt pathway. Negatively regulates TGFB1-mediated activation of SMAD2/3 by mediating the internalization of TGFBR1 from membrane rafts leading to its subsequent degradation. Binds 20(S)-hydroxycholesterol (20(S)-OHC). The chain is Caveolin-1 (CAV1) from Canis lupus familiaris (Dog).